Reading from the N-terminus, the 189-residue chain is dCTP deaminase (189 aa).

DCTP contacts are provided by residues 112-117 (KSTYAR), 136-138 (TLE), glutamine 157, tyrosine 171, and glutamine 181. The Proton donor/acceptor role is filled by glutamate 138.

Belongs to the dCTP deaminase family. Homotrimer.

It catalyses the reaction dCTP + H2O + H(+) = dUTP + NH4(+). The protein operates within pyrimidine metabolism; dUMP biosynthesis; dUMP from dCTP (dUTP route): step 1/2. Its function is as follows. Catalyzes the deamination of dCTP to dUTP. In Burkholderia orbicola (strain MC0-3), this protein is dCTP deaminase.